We begin with the raw amino-acid sequence, 333 residues long: Glycerol-3-phosphate dehydrogenase [NAD(P)+] (333 aa).

Residues Trp-13, Lys-33, and Lys-108 each contribute to the NADPH site. Sn-glycerol 3-phosphate is bound by residues Lys-108 and Gly-138. Ser-142 is a binding site for NADPH. 5 residues coordinate sn-glycerol 3-phosphate: Lys-193, Asp-246, Ser-256, Arg-257, and Asn-258. Lys-193 functions as the Proton acceptor in the catalytic mechanism. Residue Arg-257 coordinates NADPH. Val-281 and Glu-283 together coordinate NADPH.

It belongs to the NAD-dependent glycerol-3-phosphate dehydrogenase family.

Its subcellular location is the cytoplasm. The enzyme catalyses sn-glycerol 3-phosphate + NAD(+) = dihydroxyacetone phosphate + NADH + H(+). The catalysed reaction is sn-glycerol 3-phosphate + NADP(+) = dihydroxyacetone phosphate + NADPH + H(+). It functions in the pathway membrane lipid metabolism; glycerophospholipid metabolism. Functionally, catalyzes the reduction of the glycolytic intermediate dihydroxyacetone phosphate (DHAP) to sn-glycerol 3-phosphate (G3P), the key precursor for phospholipid synthesis. The polypeptide is Glycerol-3-phosphate dehydrogenase [NAD(P)+] (Bifidobacterium longum subsp. infantis (strain ATCC 15697 / DSM 20088 / JCM 1222 / NCTC 11817 / S12)).